Here is a 647-residue protein sequence, read N- to C-terminus: Threonine--tRNA ligase (647 aa).

Residues 1–61 (MIKITFPDGA…EEDGSIEIVT (61 aa)) enclose the TGS domain. Residues 240–538 (DHRKLGKELD…LIETYKGAFP (299 aa)) are catalytic. 3 residues coordinate Zn(2+): Cys-334, His-385, and His-515.

Belongs to the class-II aminoacyl-tRNA synthetase family. Homodimer. Zn(2+) is required as a cofactor.

It localises to the cytoplasm. The catalysed reaction is tRNA(Thr) + L-threonine + ATP = L-threonyl-tRNA(Thr) + AMP + diphosphate + H(+). In terms of biological role, catalyzes the attachment of threonine to tRNA(Thr) in a two-step reaction: L-threonine is first activated by ATP to form Thr-AMP and then transferred to the acceptor end of tRNA(Thr). Also edits incorrectly charged L-seryl-tRNA(Thr). This is Threonine--tRNA ligase from Streptococcus pyogenes serotype M49 (strain NZ131).